Consider the following 399-residue polypeptide: Formaldehyde dismutase (399 aa).

Cysteine 46 lines the Zn(2+) pocket. Position 47-51 (47-51 (GSDQH)) interacts with NAD(+). 6 residues coordinate Zn(2+): histidine 67, cysteine 97, cysteine 100, cysteine 103, cysteine 111, and aspartate 170. Residue threonine 174 participates in NAD(+) binding. Residue histidine 177 coordinates Zn(2+). NAD(+) is bound by residues 197-198 (PV), 218-219 (DQ), arginine 223, valine 263, histidine 268, proline 299, 299-301 (PGI), and 336-338 (GMA).

This sequence belongs to the zinc-containing alcohol dehydrogenase family. In terms of assembly, homotetramer. It depends on Zn(2+) as a cofactor. The cofactor is NAD(+). NADH serves as cofactor.

It catalyses the reaction 2 formaldehyde + H2O = methanol + formate + H(+). Its activity is regulated as follows. Inhibited by the substrate analog pyrazole but not by NAD analogs such as AMP, ADP, ATP or N-methylnicotinamide chloride. Functionally, active against a range of primary alcohols as well as some secondary alcohols. Exhibits higher activity against alcohols with longer carbon chains. The protein is Formaldehyde dismutase of Pseudomonas putida (Arthrobacter siderocapsulatus).